A 209-amino-acid chain; its full sequence is Protein TIFY 11c (209 aa).

The Tify domain maps to 93–128 (EITEKAQLTIFYGGSVVVFDDFPAEKAGELMKLAGS). The Jas signature appears at 153-177 (PIARKVSLQRFLEKRKNRIVVAEPL). The Nuclear localization signal signature appears at 155 to 162 (ARKVSLQR). The tract at residues 175 to 209 (EPLPESEKKEAESSKRAKKDDGGASWLQVNPTLSL) is disordered. Residues 179-196 (ESEKKEAESSKRAKKDDG) show a composition bias toward basic and acidic residues.

Belongs to the TIFY/JAZ family. In terms of processing, ubiquitinated. Targeted for degradation by the SCF(COI1) E3 ubiquitin ligase-proteasome pathway during jasmonate signaling.

The protein resides in the nucleus. Functionally, repressor of jasmonate responses. The polypeptide is Protein TIFY 11c (Oryza sativa subsp. indica (Rice)).